The primary structure comprises 263 residues: Zinc finger protein STAMENLESS 1 (263 aa).

The segment at 1-51 (MNSSRRQEGSPLDLNNLPDEFGKQTVESSTTTAASSAEASRVTKKKSNGGK) is disordered. Residues 25-40 (TVESSTTTAASSAEAS) show a composition bias toward low complexity. The C2H2-type zinc-finger motif lies at 58–80 (YECRFCSLKFCKSQALGGHMNRH).

As to expression, expressed in leaf primordia, inflorescence meristem, rachis branch meristems, floral meristem and floral organ primordia.

The protein resides in the nucleus. Regulates floral organ identity and cell proliferation in the inner floral whorls. Probably specifies the identities of lodicule and stamen through positive regulation of MADS16 expression. May contribute to morphogenesis by suppressing OSH1 expression in the lateral organs. The protein is Zinc finger protein STAMENLESS 1 (SL1) of Oryza sativa subsp. japonica (Rice).